We begin with the raw amino-acid sequence, 137 residues long: Large ribosomal subunit protein uL16 (137 aa).

Belongs to the universal ribosomal protein uL16 family. In terms of assembly, part of the 50S ribosomal subunit.

Functionally, binds 23S rRNA and is also seen to make contacts with the A and possibly P site tRNAs. This is Large ribosomal subunit protein uL16 from Francisella tularensis subsp. tularensis (strain FSC 198).